The primary structure comprises 1017 residues: Multiple C2 domain and transmembrane region protein 14 (1017 aa).

The C2 1 domain maps to 1–110 (MADNVLRKLI…ASAGSETLVY (110 aa)). Residues 139–231 (AAPAATEPKP…PAEVKNPPIP (93 aa)) form a disordered region. A compositionally biased stretch (low complexity) spans 141 to 153 (PAATEPKPEAAAA). The span at 154–213 (TEEKPPEIAKAEDGKKETEAAKTEEKKEGDKKEEEKPKEEAKPDEKKPDAPPDTKAKKPD) shows a compositional bias: basic and acidic residues. Positions 217-231 (APPPPPAEVKNPPIP) are enriched in pro residues. C2 domains lie at 258-387 (DLEL…PQWY), 420-554 (DSGG…SRWF), and 587-714 (VTSD…LNSY). Ca(2+) is bound by residues D296, N299, D352, T355, and E359. 2 helical membrane passes run 851–871 (VAIV…AFLI) and 957–977 (ATCI…IVPF).

The protein belongs to the MCTP family. Ca(2+) serves as cofactor. As to expression, expressed in incipient leaf primordia and in roots meristems. Observed in flowers.

The protein localises to the membrane. The protein resides in the vesicle. Its subcellular location is the golgi apparatus membrane. May function as a signaling molecule by regulating the trafficking of other regulators. In Arabidopsis thaliana (Mouse-ear cress), this protein is Multiple C2 domain and transmembrane region protein 14.